The chain runs to 412 residues: cAMP-dependent protein kinase regulatory subunit (412 aa).

Positions 1–11 (MSNYSHSSNNP) are enriched in polar residues. A disordered region spans residues 1–146 (MSNYSHSSNN…TPPSHPKSEE (146 aa)). Over residues 16-29 (STKEDKPSSFHKIA) the composition is skewed to basic and acidic residues. The tract at residues 23–159 (SSFHKIAEDE…RLKTAVSNNF (137 aa)) is dimerization and phosphorylation. 2 stretches are compositionally biased toward polar residues: residues 49-60 (NADNSAGGNNPL) and 119-138 (TSVS…SWTP). The residue at position 120 (Ser120) is a Phosphoserine. 3',5'-cyclic AMP is bound by residues 160–291 (LFSH…EEVP), Glu238, Arg247, 292–405 (LLSS…TEYS), Glu359, and Arg368.

The protein belongs to the cAMP-dependent kinase regulatory chain family. Tetramer, composed of 2 regulatory (R) and 2 catalytic (C) subunits. In the presence of cAMP it dissociates into 2 active monomeric C subunits and an R dimer.

This is cAMP-dependent protein kinase regulatory subunit (pkaR) from Emericella nidulans (strain FGSC A4 / ATCC 38163 / CBS 112.46 / NRRL 194 / M139) (Aspergillus nidulans).